A 429-amino-acid chain; its full sequence is Phosphoribosylamine--glycine ligase (429 aa).

The ATP-grasp domain occupies 109-316 (KDFLARHQIP…LVELCLAAID (208 aa)). An ATP-binding site is contributed by 135–196 (VREQGAPIVV…EEFLDGEEAS (62 aa)). The interval 212 to 234 (SQDHKRVGDKDTGPNTGGMGAYS) is disordered. Positions 213–223 (QDHKRVGDKDT) are enriched in basic and acidic residues. Mg(2+) contacts are provided by glutamate 286 and asparagine 288.

The protein belongs to the GARS family. Mg(2+) serves as cofactor. It depends on Mn(2+) as a cofactor.

It catalyses the reaction 5-phospho-beta-D-ribosylamine + glycine + ATP = N(1)-(5-phospho-beta-D-ribosyl)glycinamide + ADP + phosphate + H(+). The protein operates within purine metabolism; IMP biosynthesis via de novo pathway; N(1)-(5-phospho-D-ribosyl)glycinamide from 5-phospho-alpha-D-ribose 1-diphosphate: step 2/2. The sequence is that of Phosphoribosylamine--glycine ligase from Vibrio vulnificus (strain CMCP6).